Reading from the N-terminus, the 729-residue chain is Fatty acid oxidation complex subunit alpha (729 aa).

Residues 1 to 189 form an enoyl-CoA hydratase/isomerase region; the sequence is MLYQSETLQL…KVGLVDAVVA (189 aa). Position 296 (aspartate 296) interacts with substrate. The interval 311 to 729 is 3-hydroxyacyl-CoA dehydrogenase; it reads SAPKQAAVLG…LLDVSISQPA (419 aa). NAD(+) contacts are provided by residues methionine 324, aspartate 343, 400–402, lysine 407, and serine 429; that span reads VVE. The active-site For 3-hydroxyacyl-CoA dehydrogenase activity is the histidine 450. Asparagine 453 lines the NAD(+) pocket. Asparagine 500 and tyrosine 660 together coordinate substrate.

This sequence in the N-terminal section; belongs to the enoyl-CoA hydratase/isomerase family. In the C-terminal section; belongs to the 3-hydroxyacyl-CoA dehydrogenase family. Heterotetramer of two alpha chains (FadB) and two beta chains (FadA).

The catalysed reaction is a (3S)-3-hydroxyacyl-CoA + NAD(+) = a 3-oxoacyl-CoA + NADH + H(+). It catalyses the reaction a (3S)-3-hydroxyacyl-CoA = a (2E)-enoyl-CoA + H2O. The enzyme catalyses a 4-saturated-(3S)-3-hydroxyacyl-CoA = a (3E)-enoyl-CoA + H2O. It carries out the reaction (3S)-3-hydroxybutanoyl-CoA = (3R)-3-hydroxybutanoyl-CoA. The catalysed reaction is a (3Z)-enoyl-CoA = a 4-saturated (2E)-enoyl-CoA. It catalyses the reaction a (3E)-enoyl-CoA = a 4-saturated (2E)-enoyl-CoA. It functions in the pathway lipid metabolism; fatty acid beta-oxidation. Involved in the aerobic and anaerobic degradation of long-chain fatty acids via beta-oxidation cycle. Catalyzes the formation of 3-oxoacyl-CoA from enoyl-CoA via L-3-hydroxyacyl-CoA. It can also use D-3-hydroxyacyl-CoA and cis-3-enoyl-CoA as substrate. This chain is Fatty acid oxidation complex subunit alpha, found in Yersinia enterocolitica serotype O:8 / biotype 1B (strain NCTC 13174 / 8081).